The primary structure comprises 104 residues: Small ribosomal subunit protein bS18 (104 aa).

The span at 1-14 shows a compositional bias: basic and acidic residues; the sequence is MMNNEHDNFQKEVE. Residues 1 to 25 form a disordered region; it reads MMNNEHDNFQKEVETTTETTFNREE.

Belongs to the bacterial ribosomal protein bS18 family. As to quaternary structure, part of the 30S ribosomal subunit. Forms a tight heterodimer with protein bS6.

Its function is as follows. Binds as a heterodimer with protein bS6 to the central domain of the 16S rRNA, where it helps stabilize the platform of the 30S subunit. This is Small ribosomal subunit protein bS18 from Mycoplasma pneumoniae (strain ATCC 29342 / M129 / Subtype 1) (Mycoplasmoides pneumoniae).